A 269-amino-acid chain; its full sequence is MTDVPSKPPQTTPPPKPKSRAPTTIFSSPPQLPDRSSLNISHTASTPTLTPTPLQQQQIHTDGNSQQPKSSPPPLPERQSFSNSPNRQTQSFIQKPALPPRDSQYNTISGSTVFKSNNNINNNNNDSHIITNGNASTSFIQGNRVTRVLNTNKSEPILQQPQQSHSPQQQQQQHTPNHQQPLSPQQQKDLAQKRSTMPLPPRPNKNRPLPTPISPESHPLTINEENSITEDKEQQPQQSAPPQPQLQQSQQNTDNSRKPIVAPPTPTIQ.

Residues 1 to 16 (MTDVPSKPPQTTPPPK) are compositionally biased toward pro residues. Disordered stretches follow at residues 1–110 (MTDV…TISG) and 157–269 (ILQQ…PTIQ). Over residues 21–45 (APTTIFSSPPQLPDRSSLNISHTAS) the composition is skewed to polar residues. Positions 46-58 (TPTLTPTPLQQQQ) are enriched in low complexity. The segment covering 80-93 (SFSNSPNRQTQSFI) has biased composition (polar residues). Low complexity predominate over residues 159-181 (QQPQQSHSPQQQQQQHTPNHQQP). A compositionally biased stretch (polar residues) spans 182–195 (LSPQQQKDLAQKRS). The segment covering 198–213 (PLPPRPNKNRPLPTPI) has biased composition (pro residues).

This is an uncharacterized protein from Dictyostelium discoideum (Social amoeba).